Reading from the N-terminus, the 170-residue chain is Lipoprotein signal peptidase (170 aa).

3 consecutive transmembrane segments (helical) span residues 9-29 (FNIFVFIISLIFFDQLSKYLV), 72-92 (IFFLAMPIFILIFVFYLSLKE), and 94-114 (NCIARISLLLIFSGGVGNVID). Residues aspartate 124 and aspartate 146 contribute to the active site. Residues 143–163 (NFADSYVVIGMILFLVYDFFI) form a helical membrane-spanning segment.

Belongs to the peptidase A8 family.

It is found in the cell inner membrane. The catalysed reaction is Release of signal peptides from bacterial membrane prolipoproteins. Hydrolyzes -Xaa-Yaa-Zaa-|-(S,diacylglyceryl)Cys-, in which Xaa is hydrophobic (preferably Leu), and Yaa (Ala or Ser) and Zaa (Gly or Ala) have small, neutral side chains.. It participates in protein modification; lipoprotein biosynthesis (signal peptide cleavage). Its function is as follows. This protein specifically catalyzes the removal of signal peptides from prolipoproteins. The polypeptide is Lipoprotein signal peptidase (Borreliella burgdorferi (strain ATCC 35210 / DSM 4680 / CIP 102532 / B31) (Borrelia burgdorferi)).